A 584-amino-acid polypeptide reads, in one-letter code: Transcription factor 7-like 1 (584 aa).

Residues 1 to 28 (MPQLGGGRGGAGGGGGGSGAGATSGGDD) show a composition bias toward gly residues. The tract at residues 1–71 (MPQLGGGRGG…VKSSLVNESE (71 aa)) is CTNNB1-binding. Disordered stretches follow at residues 1 to 99 (MPQL…RDYF), 159 to 179 (ATVKDTRSPSPAHLSNKVPVV), and 194 to 231 (YSNDHFSPASPPTHLSPEIDPKTGIPRPPHPSELSPYY). A compositionally biased stretch (low complexity) spans 64–78 (SSLVNESENQSSSSD). A compositionally biased stretch (basic and acidic residues) spans 80–99 (EAERRPQPARDAFQKPRDYF). Residues 342–410 (VKKPLNAFML…LHAQLYPTWS (69 aa)) constitute a DNA-binding region (HMG box). Positions 412–501 (RDNYGKKKKR…HSEQAQPLSL (90 aa)) are disordered. Residues 417–423 (KKKKRKR) carry the Nuclear localization signal motif. Composition is skewed to low complexity over residues 427–437 (LSQTQSQQQIQ) and 470–491 (SALDSPATPSAALASPAAPAAT). Polar residues predominate over residues 492–501 (HSEQAQPLSL).

It belongs to the TCF/LEF family. Binds the armadillo repeat of CTNNB1 and forms a stable complex. Interacts with DAZAP2. As to expression, detected in the basal layer of epidermis and in outer root sheath and bulge of hair follicles.

The protein localises to the nucleus. Functionally, participates in the Wnt signaling pathway. Binds to DNA and acts as a repressor in the absence of CTNNB1, and as an activator in its presence. Necessary for the terminal differentiation of epidermal cells, the formation of keratohyalin granules and the development of the barrier function of the epidermis. The protein is Transcription factor 7-like 1 (Tcf7l1) of Mus musculus (Mouse).